We begin with the raw amino-acid sequence, 965 residues long: Isoleucine--tRNA ligase (965 aa).

The 'HIGH' region signature appears at 68–78 (PYANGSLHMGH). Glu582 serves as a coordination point for L-isoleucyl-5'-AMP. The 'KMSKS' region signature appears at 623–627 (KMSKS). Position 626 (Lys626) interacts with ATP. Residues Cys936, Cys939, Cys956, and Cys959 each coordinate Zn(2+).

This sequence belongs to the class-I aminoacyl-tRNA synthetase family. IleS type 1 subfamily. As to quaternary structure, monomer. It depends on Zn(2+) as a cofactor.

It is found in the cytoplasm. It carries out the reaction tRNA(Ile) + L-isoleucine + ATP = L-isoleucyl-tRNA(Ile) + AMP + diphosphate. Functionally, catalyzes the attachment of isoleucine to tRNA(Ile). As IleRS can inadvertently accommodate and process structurally similar amino acids such as valine, to avoid such errors it has two additional distinct tRNA(Ile)-dependent editing activities. One activity is designated as 'pretransfer' editing and involves the hydrolysis of activated Val-AMP. The other activity is designated 'posttransfer' editing and involves deacylation of mischarged Val-tRNA(Ile). This is Isoleucine--tRNA ligase from Prochlorococcus marinus (strain MIT 9515).